The following is a 786-amino-acid chain: MQVESTLFSHPKYWAECFGTAPFLPMSRKEMEKLGWDSCDIIIVTGDAYVDHPSFGMAVIGRMLEAQGYRVGIIAQPDWSSKDAFMQLGRPNLFFGVTAGNMDSMINRYTADRRIRSDDAYTPGDVGGKRPDRAVTVYTQRCKEAFKDVPVIIGGIEASLRRIAHYDYWSDKVRRSVIFDAKADILMYGNAERPLAEVARRLAAGEAIADIQDVRGTAVIRKEPMPEWRGMDSRKIDQLHKIDPIPNPYGADDVGCANLSGPSDAKIFDNDAPKPISVQPPRPKPWDKTYVLLPAFEKVSEDKYLYAHASRILHQEQNPGCARALFQPHGDRGVWVNPPAWPLNTDEMDAVFDLPYKRVPHPAYGKEKIPAYDMIKTSINIMRGCFGGCSFCSITEHEGRIIQSRSQESIIKEIKDIQDKVPGFTGVISDLGGPTANMYRLGCTSEKAEKTCRRLSCVYPSICGHLGTDHKHTIDLYRAARAVPGIKKILIASGVRYDLAIEDPAYVKELVQHHVGGYLKIAPEHTEEGPLSKMMKPGMGAYDKFKELFDKFSKEAGKEQFLIPYFISAHPGTTDEDMLNLALWLKERKFKLDQVQNFYPSPMANATTIYHTELNSLKNVKHTSEVVPVPKKGRQRRLHKALLRYHDPAGWPIIREGLIAMGREDLIGNSPNHLVPPEGRNERGPKWMKDANQGQKALTRFSGNQFDERKGKGDAKGKPSASKPKGPKSGANAPQSQQPKTSRPGAKAPFGQSGFKGKAEQGKAGQNKAGHQGRAGKASSGRQQAK.

One can recognise a Radical SAM core domain in the interval 371–649 (AYDMIKTSIN…KALLRYHDPA (279 aa)). The [4Fe-4S] cluster site is built by C385, C389, and C392. Disordered stretches follow at residues 669–688 (NSPNHLVPPEGRNERGPKWM) and 698–786 (LTRF…QQAK). 2 stretches are compositionally biased toward basic and acidic residues: residues 679–688 (GRNERGPKWM) and 706–717 (FDERKGKGDAKG). Residues 718–731 (KPSASKPKGPKSGA) show a composition bias toward low complexity. Residues 732–741 (NAPQSQQPKT) are compositionally biased toward polar residues.

It belongs to the UPF0313 family. [4Fe-4S] cluster serves as cofactor.

The polypeptide is UPF0313 protein SO_0311 (Shewanella oneidensis (strain ATCC 700550 / JCM 31522 / CIP 106686 / LMG 19005 / NCIMB 14063 / MR-1)).